Here is a 131-residue protein sequence, read N- to C-terminus: Lymphocyte antigen 6C1 (131 aa).

The N-terminal stretch at 1 to 26 is a signal peptide; the sequence is MDTSHTTKSCVLILLVALLCAERAQG. Residues 27–115 enclose the UPAR/Ly6 domain; it reads LQCYECYGVP…PTAGSTWTMA (89 aa). 5 disulfides stabilise this stretch: Cys-29-Cys-53, Cys-32-Cys-41, Cys-46-Cys-74, Cys-78-Cys-95, and Cys-96-Cys-101. Gly-109 carries the GPI-anchor amidated glycine lipid modification. Positions 110 to 131 are cleaved as a propeptide — removed in mature form; the sequence is STWTMAGVLLFSLSSVVLQTLL.

Its subcellular location is the cell membrane. This is Lymphocyte antigen 6C1 (Ly6c1) from Mus musculus (Mouse).